The chain runs to 289 residues: ATP synthase mitochondrial F1 complex assembly factor 2 (289 aa).

The N-terminal 40 residues, 1 to 40, are a transit peptide targeting the mitochondrion; sequence MWRSCLRLRDGGRRLLNRPAGGPSASMSPGPTIPSPARAY. A disordered region spans residues 13–40; it reads RRLLNRPAGGPSASMSPGPTIPSPARAY. Lys-133 is subject to N6-succinyllysine.

It belongs to the ATP12 family. In terms of assembly, interacts with ATP5F1B; involved in the assembly of the F1 component of the mitochondrial ATP synthase (ATPase). Interacts with FMC1. Widely expressed.

Its subcellular location is the mitochondrion inner membrane. Its function is as follows. Plays a role in the assembly of the F1 component of the mitochondrial ATP synthase (ATPase). The sequence is that of ATP synthase mitochondrial F1 complex assembly factor 2 from Homo sapiens (Human).